Consider the following 295-residue polypeptide: Phosphatidylserine decarboxylase proenzyme (295 aa).

Active-site charge relay system; for autoendoproteolytic cleavage activity residues include aspartate 113, histidine 169, and serine 256. Serine 256 functions as the Schiff-base intermediate with substrate; via pyruvic acid; for decarboxylase activity in the catalytic mechanism. Serine 256 is subject to Pyruvic acid (Ser); by autocatalysis.

This sequence belongs to the phosphatidylserine decarboxylase family. PSD-B subfamily. Prokaryotic type II sub-subfamily. Heterodimer of a large membrane-associated beta subunit and a small pyruvoyl-containing alpha subunit. Pyruvate serves as cofactor. Is synthesized initially as an inactive proenzyme. Formation of the active enzyme involves a self-maturation process in which the active site pyruvoyl group is generated from an internal serine residue via an autocatalytic post-translational modification. Two non-identical subunits are generated from the proenzyme in this reaction, and the pyruvate is formed at the N-terminus of the alpha chain, which is derived from the carboxyl end of the proenzyme. The autoendoproteolytic cleavage occurs by a canonical serine protease mechanism, in which the side chain hydroxyl group of the serine supplies its oxygen atom to form the C-terminus of the beta chain, while the remainder of the serine residue undergoes an oxidative deamination to produce ammonia and the pyruvoyl prosthetic group on the alpha chain. During this reaction, the Ser that is part of the protease active site of the proenzyme becomes the pyruvoyl prosthetic group, which constitutes an essential element of the active site of the mature decarboxylase.

It is found in the cell membrane. It carries out the reaction a 1,2-diacyl-sn-glycero-3-phospho-L-serine + H(+) = a 1,2-diacyl-sn-glycero-3-phosphoethanolamine + CO2. It participates in phospholipid metabolism; phosphatidylethanolamine biosynthesis; phosphatidylethanolamine from CDP-diacylglycerol: step 2/2. Functionally, catalyzes the formation of phosphatidylethanolamine (PtdEtn) from phosphatidylserine (PtdSer). This is Phosphatidylserine decarboxylase proenzyme from Clostridium botulinum (strain 657 / Type Ba4).